Here is a 64-residue protein sequence, read N- to C-terminus: Small ribosomal subunit protein eS17 (64 aa).

It belongs to the eukaryotic ribosomal protein eS17 family.

The chain is Small ribosomal subunit protein eS17 from Methanosarcina mazei (strain ATCC BAA-159 / DSM 3647 / Goe1 / Go1 / JCM 11833 / OCM 88) (Methanosarcina frisia).